Consider the following 160-residue polypeptide: Major strawberry allergen Fra a 1.07 (160 aa).

The protein belongs to the BetVI family. Phosphorylated in vivo. Phosphorylation prevents its activity as ribonuclease. Highly expressed in roots. Expressed a low levels in ripe red fruits.

In terms of biological role, possesses ribonuclease activity in vitro. The sequence is that of Major strawberry allergen Fra a 1.07 from Fragaria ananassa (Strawberry).